The chain runs to 512 residues: N-fatty-acyl-amino acid synthase/hydrolase PM20D1 (512 aa).

The first 34 residues, 1-34 (MAVSRWKAVGSTLLAAFLVGLVVLIAVLLIRTYT), serve as a signal peptide directing secretion. N-linked (GlcNAc...) asparagine glycosylation is found at Asn45 and Asn81. A Zn(2+)-binding site is contributed by His134. The active site involves Asp136. Residue Asp166 participates in Zn(2+) binding. The Proton acceptor role is filled by Glu200. 2 residues coordinate Zn(2+): Glu201 and Asp227. Asn450 carries N-linked (GlcNAc...) asparagine glycosylation. His472 lines the Zn(2+) pocket.

The protein belongs to the peptidase M20A family.

The protein localises to the secreted. It catalyses the reaction an N-acyl-L-amino acid + H2O = an L-alpha-amino acid + a carboxylate. The catalysed reaction is an N-acyl-aromatic L-alpha-amino acid + H2O = an aromatic L-alpha-amino acid + a carboxylate. The enzyme catalyses N-(5Z,8Z,11Z,14Z)-eicosatetraenoyl-glycine + H2O = (5Z,8Z,11Z,14Z)-eicosatetraenoate + glycine. It carries out the reaction N-hexadecanoyl-L-phenylalanine + H2O = hexadecanoate + L-phenylalanine. It catalyses the reaction N-octadecanoyl-L-phenylalanine + H2O = octadecanoate + L-phenylalanine. The catalysed reaction is N-(4Z,7Z,10Z,13Z,16Z,19Z-docosahexaenoyl)-L-phenylalanine + H2O = (4Z,7Z,10Z,13Z,16Z,19Z)-docosahexaenoate + L-phenylalanine. The enzyme catalyses N-(9Z-octadecenoyl)-L-asparagine + H2O = L-asparagine + (9Z)-octadecenoate. It carries out the reaction (9Z)-octadecenoate + glycine = N-(9Z-octadecenoyl)glycine + H2O. It catalyses the reaction N-(9Z-octadecenoyl)-L-lysine + H2O = L-lysine + (9Z)-octadecenoate. The catalysed reaction is N-(9Z-octadecenoyl)-L-methionine + H2O = (9Z)-octadecenoate + L-methionine. The enzyme catalyses N-(9Z-octadecenoyl)-L-serine + H2O = L-serine + (9Z)-octadecenoate. It carries out the reaction N-(9Z-octadecenoyl)-L-tryptophan + H2O = L-tryptophan + (9Z)-octadecenoate. It catalyses the reaction N-(9Z-octadecenoyl)-L-tyrosine + H2O = L-tyrosine + (9Z)-octadecenoate. The catalysed reaction is N-(9Z-octadecenoyl)-L-glutamine + H2O = L-glutamine + (9Z)-octadecenoate. The enzyme catalyses N-(5Z,8Z,11Z,14Z-eicosatetraenoyl)-L-serine + H2O = (5Z,8Z,11Z,14Z)-eicosatetraenoate + L-serine. It carries out the reaction (5Z,8Z,11Z,14Z)-eicosatetraenoate + L-phenylalanine = N-(5Z,8Z,11Z,14Z-eicosatetraenoyl)-L-phenylalanine + H2O. It catalyses the reaction N-(9Z-octadecenoyl)-L-leucine + H2O = L-leucine + (9Z)-octadecenoate. The catalysed reaction is L-phenylalanine + (9Z)-octadecenoate = N-(9Z-octadecenoyl)-L-phenylalanine + H2O. Its pathway is amino-acid metabolism. The protein operates within energy metabolism; electron transfer. It functions in the pathway lipid metabolism; fatty acid metabolism. Lipoproteins are powerful coactivators of PM20D1 activity in vitro and NAA biosynthesis in vivo. Its function is as follows. Secreted enzyme that regulates the endogenous N-fatty acyl amino acid (NAAs) tissue and circulating levels by functioning as a bidirectional NAA synthase/hydrolase. It condenses free fatty acids and free amino acids to generate NAAs and bidirectionally catalyzes the reverse hydrolysis reaction. Some of these NAAs stimulate oxidative metabolism via mitochondrial uncoupling, increasing energy expenditure in a UPC1-independent manner. Thereby, this secreted protein may indirectly regulate whole body energy expenditure. PM20D1 circulates in tight association with both low- and high-density (LDL and HDL,respectively) lipoprotein particles. The protein is N-fatty-acyl-amino acid synthase/hydrolase PM20D1 of Xenopus tropicalis (Western clawed frog).